The sequence spans 1367 residues: Mediator of RNA polymerase II transcription subunit 23 (1367 aa).

Positions 1343-1367 (PPQALNSGSPAPQSNQVPASLPVTQ) are disordered. Residues 1346–1367 (ALNSGSPAPQSNQVPASLPVTQ) show a composition bias toward polar residues.

Belongs to the Mediator complex subunit 23 family. In terms of assembly, component of the Mediator complex, which is composed of MED1, MED4, MED6, MED7, MED8, MED9, MED10, MED11, MED12, MED13, MED13L, MED14, MED15, MED16, MED17, MED18, MED19, MED20, MED21, MED22, MED23, MED24, MED25, MED26, MED27, MED29, MED30, MED31, CCNC, CDK8 and CDC2L6/CDK11. The MED12, MED13, CCNC and CDK8 subunits form a distinct module termed the CDK8 module. Mediator containing the CDK8 module is less active than Mediator lacking this module in supporting transcriptional activation. Individual preparations of the Mediator complex lacking one or more distinct subunits have been variously termed ARC, CRSP, DRIP, PC2, SMCC and TRAP. Interacts with CEBPB (when not methylated), CTNNB1, and GLI3. Interacts with CDK8 and ELK1.

The protein localises to the nucleus. Its function is as follows. Component of the Mediator complex, a coactivator involved in the regulated transcription of nearly all RNA polymerase II-dependent genes. Mediator functions as a bridge to convey information from gene-specific regulatory proteins to the basal RNA polymerase II transcription machinery. Mediator is recruited to promoters by direct interactions with regulatory proteins and serves as a scaffold for the assembly of a functional pre-initiation complex with RNA polymerase II and the general transcription factors. Also required for transcriptional activation subsequent to the assembly of the pre-initiation complex. Required for transcriptional activation by adenovirus E1A protein. Required for ELK1-dependent transcriptional activation in response to activated Ras signaling. This is Mediator of RNA polymerase II transcription subunit 23 (Med23) from Mus musculus (Mouse).